We begin with the raw amino-acid sequence, 251 residues long: Derlin-1 (251 aa).

The residue at position 2 (Ser-2) is an N-acetylserine. Topologically, residues 2-15 (SDIGDWFRSIPAIT) are cytoplasmic. Residues 16–31 (RYWFAATVAVPLVGKL) traverse the membrane as a helical segment. At 32–69 (GLISPAYLFLWPEAFLYRFQIWRPITATFYFPVGPGTG) the chain is on the lumenal side. Residues 70–89 (FLYLVNLYFLYHYSTRLETG) form a helical membrane-spanning segment. The Cytoplasmic segment spans residues 90–94 (AFDGR). The helical transmembrane segment at 95–115 (PADYLFMLLFNWICIVITGLA) threads the bilayer. At 116 to 122 (MDMQLLM) the chain is on the lumenal side. The chain crosses the membrane as a helical span at residues 123–137 (IPLIMSVLYVWAQLN). Topologically, residues 138 to 154 (RDMIVSFWFGTRFKACY) are cytoplasmic. Residues 155–166 (LPWVILGFNYII) traverse the membrane as a helical segment. Topologically, residues 167-170 (GGSV) are lumenal. A helical transmembrane segment spans residues 171 to 189 (INELIGNLVGHLYFFLMFR). The Cytoplasmic segment spans residues 190-251 (YPMDLGGRNF…WGQGFRLGDQ (62 aa)). Ser-201 carries the phosphoserine modification. Thr-202 bears the Phosphothreonine mark. Ser-226 carries the phosphoserine modification. The segment at 229-251 (RAADQNGGGGRHNWGQGFRLGDQ) is disordered. An SHP-box motif is present at residues 241–248 (NWGQGFRL).

Belongs to the derlin family. Homotetramer. The four subunits of the tetramer are arranged in a twofold symmetry. Forms homo- and heterooligomers with DERL2 and DERL3; binding to DERL3 is poorer than that between DERL2 and DERL3. Interacts (via SHP-box motif) with VCP. Interacts with AMFR, SELENOS, SEL1L, SELENOK and SYVN1, as well as with SEL1L-SYVN1 and VCP-SELENOS protein complexes; this interaction is weaker than that observed between DERL2 and these complexes. Interacts with NGLY1 and YOD1. Does not bind to EDEM1. Interacts with DNAJB9. Interacts with RNF103. Interacts with HM13. Interacts with XBP1 isoform 1 (via luminal/ectodomain domain); the interaction obviates the need for ectodomain shedding prior HM13/SPP-mediated XBP1 isoform 1 cleavage. Interacts with the signal recognition particle/SRP and the SRP receptor; in the process of endoplasmic reticulum stress-induced pre-emptive quality control. May interact with UBXN6. Interacts with ZFAND2B; probably through VCP. Interacts with CCDC47. Interacts with C18orf32. May interact with TRAM1. Forms a complex with SVIP and VCP/p97.

The protein localises to the endoplasmic reticulum membrane. Functional component of endoplasmic reticulum-associated degradation (ERAD) for misfolded lumenal proteins. Forms homotetramers which encircle a large channel traversing the endoplasmic reticulum (ER) membrane. This allows the retrotranslocation of misfolded proteins from the ER into the cytosol where they are ubiquitinated and degraded by the proteasome. The channel has a lateral gate within the membrane which provides direct access to membrane proteins with no need to reenter the ER lumen first. May mediate the interaction between VCP and the misfolded protein. Also involved in endoplasmic reticulum stress-induced pre-emptive quality control, a mechanism that selectively attenuates the translocation of newly synthesized proteins into the endoplasmic reticulum and reroutes them to the cytosol for proteasomal degradation. By controlling the steady-state expression of the IGF1R receptor, indirectly regulates the insulin-like growth factor receptor signaling pathway. This is Derlin-1 from Pongo abelii (Sumatran orangutan).